Reading from the N-terminus, the 716-residue chain is UvrABC system protein C (716 aa).

A GIY-YIG domain is found at 14 to 94; the sequence is AEPGCYLMKD…IKRHRPRFNI (81 aa). One can recognise a UVR domain in the interval 206-241; it reads TELVERLHGRMDEAADALRFEDAARLRDQLQAVERS.

Belongs to the UvrC family. Interacts with UvrB in an incision complex.

It is found in the cytoplasm. The UvrABC repair system catalyzes the recognition and processing of DNA lesions. UvrC both incises the 5' and 3' sides of the lesion. The N-terminal half is responsible for the 3' incision and the C-terminal half is responsible for the 5' incision. This Anaeromyxobacter sp. (strain Fw109-5) protein is UvrABC system protein C.